The primary structure comprises 159 residues: Phosphopantetheine adenylyltransferase (159 aa).

T10 provides a ligand contact to substrate. Residues 10 to 11 (TF) and H18 each bind ATP. The substrate site is built by K42, L74, and R88. Residues 89–91 (GLR), E99, and 124–130 (NSFISST) contribute to the ATP site.

It belongs to the bacterial CoaD family. In terms of assembly, homohexamer. Mg(2+) is required as a cofactor.

It is found in the cytoplasm. The catalysed reaction is (R)-4'-phosphopantetheine + ATP + H(+) = 3'-dephospho-CoA + diphosphate. It functions in the pathway cofactor biosynthesis; coenzyme A biosynthesis; CoA from (R)-pantothenate: step 4/5. Functionally, reversibly transfers an adenylyl group from ATP to 4'-phosphopantetheine, yielding dephospho-CoA (dPCoA) and pyrophosphate. This Shewanella pealeana (strain ATCC 700345 / ANG-SQ1) protein is Phosphopantetheine adenylyltransferase.